The chain runs to 480 residues: Protein nucleotidyltransferase YdiU (480 aa).

8 residues coordinate ATP: G86, G88, R89, K109, D121, G122, R172, and R179. The active-site Proton acceptor is the D248. The Mg(2+) site is built by N249 and D258. Residue D258 participates in ATP binding.

It belongs to the SELO family. Requires Mg(2+) as cofactor. The cofactor is Mn(2+).

The enzyme catalyses L-seryl-[protein] + ATP = 3-O-(5'-adenylyl)-L-seryl-[protein] + diphosphate. The catalysed reaction is L-threonyl-[protein] + ATP = 3-O-(5'-adenylyl)-L-threonyl-[protein] + diphosphate. It carries out the reaction L-tyrosyl-[protein] + ATP = O-(5'-adenylyl)-L-tyrosyl-[protein] + diphosphate. It catalyses the reaction L-histidyl-[protein] + UTP = N(tele)-(5'-uridylyl)-L-histidyl-[protein] + diphosphate. The enzyme catalyses L-seryl-[protein] + UTP = O-(5'-uridylyl)-L-seryl-[protein] + diphosphate. The catalysed reaction is L-tyrosyl-[protein] + UTP = O-(5'-uridylyl)-L-tyrosyl-[protein] + diphosphate. In terms of biological role, nucleotidyltransferase involved in the post-translational modification of proteins. It can catalyze the addition of adenosine monophosphate (AMP) or uridine monophosphate (UMP) to a protein, resulting in modifications known as AMPylation and UMPylation. This Salmonella enteritidis PT4 (strain P125109) protein is Protein nucleotidyltransferase YdiU.